The primary structure comprises 212 residues: KxDL motif-containing protein CG10681 (212 aa).

Positions 128–159 (RSSLAEEAEDDTEAQAKKTAETPAPAAAKPVL) are disordered. Residues 148–157 (ETPAPAAAKP) show a composition bias toward low complexity.

It belongs to the KXD1 family.

This Drosophila melanogaster (Fruit fly) protein is KxDL motif-containing protein CG10681.